The primary structure comprises 416 residues: Tumor necrosis factor receptor superfamily member 16 (416 aa).

Residues 1 to 19 form the signal peptide; sequence MAGFVPLLLLLLPAGPTWG. TNFR-Cys repeat units lie at residues 23–57, 58–99, 100–138, and 140–180; these read KCLT…TVCE, PCLD…DAVC, RCAY…DTVC, and ECPE…DAEC. Intrachain disulfides connect cysteine 24–cysteine 35, cysteine 36–cysteine 49, cysteine 39–cysteine 56, cysteine 59–cysteine 75, cysteine 78–cysteine 91, cysteine 81–cysteine 99, cysteine 101–cysteine 114, cysteine 117–cysteine 130, cysteine 120–cysteine 138, cysteine 141–cysteine 156, cysteine 159–cysteine 172, and cysteine 162–cysteine 180. Topologically, residues 29 to 239 are extracellular; sequence YTTSGECCKA…PVVSRGTADN (211 aa). Asparagine 52 is a glycosylation site (N-linked (GlcNAc...) asparagine). A helical membrane pass occupies residues 240–261; it reads LIPVYCSILAAVVVGLVAYIAF. At 262–416 the chain is on the cytoplasmic side; the sequence is KRWNSCKQNK…YSESTATSPV (155 aa). 2 stretches are compositionally biased toward polar residues: residues 270–284 and 294–315; these read NKQG…QTPS and SGIS…STQG. The segment at 270-328 is disordered; it reads NKQGANNRPVNQTPSPEGEKLHSDSGISVDSQSLHDQQPPNQSTQGPAPKGDGSLYASL. Residues 333–410 form the Death domain; it reads QEEVEKLLSS…DIAESLYSES (78 aa).

In terms of assembly, homodimer; disulfide-linked. Heterodimer with SORCS2. The extracellular domains of the heterodimer bind NGF. In terms of processing, N- and O-glycosylated. Phosphorylated on serine residues. In terms of tissue distribution, detected in embryonic dorsal root ganglion and retina.

Its subcellular location is the cell membrane. It localises to the perikaryon. The protein resides in the cell projection. The protein localises to the growth cone. It is found in the dendritic spine. Its function is as follows. Low affinity receptor which can bind to NGF, BDNF, NTF3, and NTF4. Forms a heterodimeric receptor with SORCS2 that binds the precursor forms of NGF, BDNF and NTF3 with high affinity, and has much lower affinity for mature NGF and BDNF. Plays an important role in differentiation and survival of specific neuronal populations during development. Can mediate cell survival as well as cell death of neural cells. Plays a role in the inactivation of RHOA. Necessary for the circadian oscillation of clock genes in the suprachiasmatic nucleus (SCmgetaN) of the brain and in liver and of the genes involved in glucose and lipid metabolism in the liver. The polypeptide is Tumor necrosis factor receptor superfamily member 16 (NGFR) (Gallus gallus (Chicken)).